Here is a 193-residue protein sequence, read N- to C-terminus: uncharacterized protein (193 aa).

4 consecutive transmembrane segments (helical) span residues 40 to 56, 63 to 79, 86 to 110, and 117 to 138; these read LYIASLAGFIFGLLKLI, AAGLFVFPIKGIISSLC, CSGYMLATFLSLFSLALIIVGIVSC, and FIFPIISIGMALATTETCFQIY. The disordered stretch occupies residues 158–193; sequence TTTKLSRSSSAPDLSCPSLSTQPTSPNQSLSAYKKY.

It belongs to the chlamydial CPn_0442/CT_006/TC_0274 family.

The protein localises to the cell membrane. This is an uncharacterized protein from Chlamydia muridarum (strain MoPn / Nigg).